The chain runs to 877 residues: Leucine--tRNA ligase (877 aa).

Residues 48-58 (PYPSGKLHMGH) carry the 'HIGH' region motif. The 'KMSKS' region signature appears at 636 to 640 (KMSKS). Residue Lys-639 coordinates ATP.

It belongs to the class-I aminoacyl-tRNA synthetase family.

Its subcellular location is the cytoplasm. The enzyme catalyses tRNA(Leu) + L-leucine + ATP = L-leucyl-tRNA(Leu) + AMP + diphosphate. The chain is Leucine--tRNA ligase from Ralstonia pickettii (strain 12J).